We begin with the raw amino-acid sequence, 162 residues long: Ciliary microtubule inner protein 5 (162 aa).

The interval Met1–Gly44 is disordered.

It is found in the cell projection. It localises to the cilium. The sequence is that of Ciliary microtubule inner protein 5 from Homo sapiens (Human).